Here is a 112-residue protein sequence, read N- to C-terminus: uncharacterized protein (112 aa).

2 positions are modified to phosphoserine: S51 and S53. The helical transmembrane segment at F90–F110 threads the bilayer.

It is found in the golgi apparatus membrane. It localises to the endoplasmic reticulum membrane. This is an uncharacterized protein from Schizosaccharomyces pombe (strain 972 / ATCC 24843) (Fission yeast).